The following is a 201-amino-acid chain: Ribonuclease HII (201 aa).

Residues 12–201 (DLVAGVDEVG…VRELLDVPVQ (190 aa)) form the RNase H type-2 domain. Residues aspartate 18, glutamate 19, and aspartate 110 each coordinate a divalent metal cation.

Belongs to the RNase HII family. Mn(2+) is required as a cofactor. Mg(2+) serves as cofactor.

The protein localises to the cytoplasm. The catalysed reaction is Endonucleolytic cleavage to 5'-phosphomonoester.. Endonuclease that specifically degrades the RNA of RNA-DNA hybrids. The chain is Ribonuclease HII from Pseudomonas aeruginosa (strain UCBPP-PA14).